Reading from the N-terminus, the 652-residue chain is MAFSAAASASTNLVPAVASGRGGAAASASQHGETARLARFGVSSSACANALSLSSSRSCASMGEVLWANGGAVRLAARRTLRVRAAGAGTIVQPEGFQITSVPTTPIDGQKTGTSGLRKKVKEFQSPNYLANWIQALFDSLPAEDVKGSTLVLGGDGRYFNKEASQIIIKIAAGNGVGKILVGREGIASTPAVSAIIRARKANGGFVMSASHNPGGPKYDWGIKFNYSSGQPAPESITDKIYGNTLSIKEIKQADIPDVNLSELGVHKFGDFSVEVIDPVADYLNLLEEVFDFDLLKGLLTSKDFRFKFDAMHAVTGAYAKPIFVDRLGAPEDSIFNGVPLEDFGGGHPDPNLTYAEELVKIMYGTDAPDFGAASDGDGDRNMILGNHFFITPSDSVAMIAANADAIPYFKTGLKGLARSMPTSGALDRVAKELGLPFFETPTGWKFFGNLMDAGKCSVCGEESFGTGSDHVREKDGIWAVLAWISIVAYKNRDRKVGEKLVTVADIAKEHWAKYGRNFFSRYDYEECESAGANKMVEHLRDIIAKSKKGDKYGNYELELADDFAYTDPIDGSVATKQGIRFIFSDGSRIIFRLSGTGSAGATIRIYVEQYEQDTTKHDLDAQDALKPLIDIALSVSKLQEFTGRTKPTVIT.

The N-terminal 84 residues, 1–84 (MAFSAAASAS…LAARRTLRVR (84 aa)), are a transit peptide targeting the chloroplast. Arg-118 and Ser-211 together coordinate alpha-D-glucose 1,6-bisphosphate. Ser-211 serves as the catalytic Phosphoserine intermediate. 4 residues coordinate Mg(2+): Ser-211, Asp-376, Asp-378, and Asp-380. At Ser-211 the chain carries Phosphoserine. Residues Asp-380, Arg-381, Thr-443, Glu-462, Ser-464, and Lys-475 each coordinate alpha-D-glucose 1,6-bisphosphate.

Belongs to the phosphohexose mutase family. It depends on Mg(2+) as a cofactor.

It is found in the plastid. The protein localises to the chloroplast. It catalyses the reaction alpha-D-glucose 1-phosphate = alpha-D-glucose 6-phosphate. The catalysed reaction is O-phospho-L-seryl-[protein] + alpha-D-glucose 1-phosphate = alpha-D-glucose 1,6-bisphosphate + L-seryl-[protein]. The enzyme catalyses alpha-D-glucose 1,6-bisphosphate + L-seryl-[protein] = O-phospho-L-seryl-[protein] + alpha-D-glucose 6-phosphate. Its activity is regulated as follows. Inhibited by the Calvin cycle intermediates fructose-1,6-bisphosphate and ribulose-1,5-bisphosphate. Functionally, catalyzes the reversible isomerization of alpha-D-glucose 1-phosphate to alpha-D-glucose 6-phosphate. The mechanism proceeds via the intermediate compound alpha-D-glucose 1,6-bisphosphate. This enzyme participates in both the breakdown and synthesis of glucose. Required for sucrose production and accumulation necessary during plant development. Promotes gravitropic responses, negative in shoots but positive in roots, by facilitating starch granules (statoliths) formation. The polypeptide is Phosphoglucomutase 1, chloroplastic (Marchantia polymorpha (Common liverwort)).